The sequence spans 374 residues: Queuine tRNA-ribosyltransferase (374 aa).

Residue Asp92 is the Proton acceptor of the active site. Substrate contacts are provided by residues 92-96 (DSGGY), Asp146, Gln193, and Gly220. Positions 251–257 (GVGKPDD) are RNA binding. The Nucleophile role is filled by Asp270. Residues 275-279 (TRSGR) are RNA binding; important for wobble base 34 recognition. The Zn(2+) site is built by Cys308, Cys310, Cys313, and His339.

The protein belongs to the queuine tRNA-ribosyltransferase family. Homodimer. Within each dimer, one monomer is responsible for RNA recognition and catalysis, while the other monomer binds to the replacement base PreQ1. Requires Zn(2+) as cofactor.

The enzyme catalyses 7-aminomethyl-7-carbaguanine + guanosine(34) in tRNA = 7-aminomethyl-7-carbaguanosine(34) in tRNA + guanine. Its pathway is tRNA modification; tRNA-queuosine biosynthesis. Its function is as follows. Catalyzes the base-exchange of a guanine (G) residue with the queuine precursor 7-aminomethyl-7-deazaguanine (PreQ1) at position 34 (anticodon wobble position) in tRNAs with GU(N) anticodons (tRNA-Asp, -Asn, -His and -Tyr). Catalysis occurs through a double-displacement mechanism. The nucleophile active site attacks the C1' of nucleotide 34 to detach the guanine base from the RNA, forming a covalent enzyme-RNA intermediate. The proton acceptor active site deprotonates the incoming PreQ1, allowing a nucleophilic attack on the C1' of the ribose to form the product. After dissociation, two additional enzymatic reactions on the tRNA convert PreQ1 to queuine (Q), resulting in the hypermodified nucleoside queuosine (7-(((4,5-cis-dihydroxy-2-cyclopenten-1-yl)amino)methyl)-7-deazaguanosine). The protein is Queuine tRNA-ribosyltransferase of Novosphingobium aromaticivorans (strain ATCC 700278 / DSM 12444 / CCUG 56034 / CIP 105152 / NBRC 16084 / F199).